We begin with the raw amino-acid sequence, 234 residues long: N-acetyl-alpha-D-glucosaminyl L-malate deacetylase 1 (234 aa).

Histidine 12, aspartate 15, and histidine 113 together coordinate Zn(2+).

The protein belongs to the PIGL family. Homohexamer. Trimer of dimers. Zn(2+) serves as cofactor.

The catalysed reaction is (S)-malyl N-acetyl-alpha-D-glucosaminide + H2O = (S)-malyl alpha-D-glucosaminide + acetate. Involved in bacillithiol (BSH) biosynthesis. Catalyzes the second step of the pathway, the deacetylation of N-acetylglucosaminylmalate (GlcNAc-Mal) to glucosamine malate (GlcN-Mal). The sequence is that of N-acetyl-alpha-D-glucosaminyl L-malate deacetylase 1 from Bacillus cereus (strain ATCC 14579 / DSM 31 / CCUG 7414 / JCM 2152 / NBRC 15305 / NCIMB 9373 / NCTC 2599 / NRRL B-3711).